We begin with the raw amino-acid sequence, 292 residues long: 4-hydroxy-tetrahydrodipicolinate synthase (292 aa).

Position 45 (Thr45) interacts with pyruvate. Catalysis depends on Tyr133, which acts as the Proton donor/acceptor. The Schiff-base intermediate with substrate role is filled by Lys161. Ile203 is a binding site for pyruvate.

This sequence belongs to the DapA family. As to quaternary structure, homotetramer; dimer of dimers.

The protein localises to the cytoplasm. The catalysed reaction is L-aspartate 4-semialdehyde + pyruvate = (2S,4S)-4-hydroxy-2,3,4,5-tetrahydrodipicolinate + H2O + H(+). The protein operates within amino-acid biosynthesis; L-lysine biosynthesis via DAP pathway; (S)-tetrahydrodipicolinate from L-aspartate: step 3/4. Its function is as follows. Catalyzes the condensation of (S)-aspartate-beta-semialdehyde [(S)-ASA] and pyruvate to 4-hydroxy-tetrahydrodipicolinate (HTPA). The protein is 4-hydroxy-tetrahydrodipicolinate synthase of Vibrio cholerae serotype O1 (strain M66-2).